The sequence spans 274 residues: Lipoprotein E (274 aa).

The first 20 residues, 1-20 (MKTTLKMTALAALSAFVLAG), serve as a signal peptide directing secretion. Residue cysteine 21 is the site of N-palmitoyl cysteine attachment. A lipid anchor (S-diacylglycerol cysteine) is attached at cysteine 21.

The protein localises to the cell outer membrane. The polypeptide is Lipoprotein E (hel) (Haemophilus influenzae (strain ATCC 51907 / DSM 11121 / KW20 / Rd)).